Reading from the N-terminus, the 414-residue chain is Glucose-1-phosphate adenylyltransferase (414 aa).

Alpha-D-glucose 1-phosphate-binding positions include Tyr103, Gly168, 183–184 (EK), and Ser201.

Belongs to the bacterial/plant glucose-1-phosphate adenylyltransferase family. Homotetramer.

It carries out the reaction alpha-D-glucose 1-phosphate + ATP + H(+) = ADP-alpha-D-glucose + diphosphate. It functions in the pathway glycan biosynthesis; glycogen biosynthesis. In terms of biological role, involved in the biosynthesis of ADP-glucose, a building block required for the elongation reactions to produce glycogen. Catalyzes the reaction between ATP and alpha-D-glucose 1-phosphate (G1P) to produce pyrophosphate and ADP-Glc. The chain is Glucose-1-phosphate adenylyltransferase from Thermus thermophilus (strain ATCC 27634 / DSM 579 / HB8).